A 2035-amino-acid chain; its full sequence is Host cell factor 1 (2035 aa).

Ala-2 is modified (N-acetylalanine). Ser-6 is subject to Phosphoserine. 5 Kelch repeats span residues 44–89, 93–140, 148–194, 217–265, and 266–313; these read LIVV…GFVC, RLLV…RLGH, KCYL…ITYG, KLVI…TIGN, and KMYV…LMDT. Residues Lys-105, Lys-163, and Lys-244 each participate in a glycyl lysine isopeptide (Lys-Gly) (interchain with G-Cter in ubiquitin) cross-link. Residue Lys-282 forms a Glycyl lysine isopeptide (Lys-Gly) (interchain with G-Cter in SUMO2) linkage. At Lys-288 the chain carries N6-acetyllysine. A Glycyl lysine isopeptide (Lys-Gly) (interchain with G-Cter in ubiquitin) cross-link involves residue Lys-363. The Fibronectin type-III 1 domain maps to 366–466; that stretch reads PPARVQLVRA…TTTTIQVLPT (101 aa). Residues 407–434 are disordered; the sequence is ATATSPTPNPVPSVPANPPKSPAPAAAA. Residue Ser-411 is modified to Phosphoserine. Positions 413 to 428 are enriched in pro residues; sequence TPNPVPSVPANPPKSP. The segment at 500-550 is required for interaction with OGT; the sequence is LVTMRPASQAGKAPVTVTSLPAGVRMVVPTQSAQGTVIGSSPQMSGMAALA. Residues Arg-504 and Arg-524 each carry the omega-N-methylarginine modification. Phosphoserine is present on residues Ser-598, Ser-666, and Ser-669. Residues 610 to 722 are interaction with SIN3A; that stretch reads LKTAAAQVGT…KGPLPAGTIL (113 aa). The segment at 750–902 is interaction with ZBTB17; sequence ILGISSVSPS…SLAGAGGHST (153 aa). At Lys-813 the chain carries N6-acetyllysine. Residues 813–912 form an interaction with GABP2 region; sequence KIITAVPKIA…SASLATPITT (100 aa). 3 HCF repeat repeats span residues 1010-1035, 1072-1097, and 1101-1126; these read TLVC…TVVA, VRVC…ATSN, and QHGC…AMSS. An HCF repeat 4; degenerate repeat occupies 1158 to 1183; sequence AAQGSKSQCQTRQTSATSTTMTVMAT. At Ser-1205 the chain carries Phosphoserine. Position 1219 is an omega-N-methylarginine (Arg-1219). Ser-1224 is modified (phosphoserine). 2 HCF repeat repeats span residues 1286–1311 and 1314–1339; these read TQVC…SNAG and QRVC…ATSN. Disordered stretches follow at residues 1292 to 1371, 1435 to 1470, and 1487 to 1515; these read PPCE…TMSV, TVTS…TSSS, and VTQS…QQLP. 3 stretches are compositionally biased toward low complexity: residues 1299 to 1312, 1329 to 1339, and 1362 to 1371; these read TGTT…NAGS, TTHTATTATSN, and TTSTGTTMSV. The HCF repeat 7; degenerate repeat unit spans residues 1349–1374; sequence QQPPAGRPCETHQTTSTGTTMSVSVG. Residues 1414–1439 form an HCF repeat 8 repeat; that stretch reads QRVCSNPPCETHETGTTHTATTVTSN. Thr-1491 carries the post-translational modification Phosphothreonine. The span at 1493–1502 shows a compositional bias: pro residues; sequence VPGPSVPPPE. Phosphoserine occurs at positions 1497, 1507, and 1771. 2 consecutive Fibronectin type-III domains span residues 1797-1888 and 1890-2006; these read LPPP…TCLP and FPGA…TSKD. Residues Lys-1807 and Lys-1808 each participate in a glycyl lysine isopeptide (Lys-Gly) (interchain with G-Cter in ubiquitin) cross-link. Residue Ser-1838 is modified to Phosphoserine. The interval 1994-2035 is disordered; it reads ATQVRWLQETSKDSSGTKPANKRPMSSPEMKSAPKKSKADGQ. The residue at position 2005 (Lys-2005) is an N6-acetyllysine. Lys-2024 participates in a covalent cross-link: Glycyl lysine isopeptide (Lys-Gly) (interchain with G-Cter in SUMO2).

Composed predominantly of six polypeptides ranging from 110 to 150 kDa and a minor 300 kDa polypeptide. The majority of N- and C-terminal cleavage products remain tightly, albeit non-covalently, associated. Interacts with POU2F1, CREB3, ZBTB17, EGR2, E2F4, CREBZF, SP1, GABP2, Sin3 HDAC complex (SIN3A, HDAC1, HDAC2, SUDS3), SAP30, SIN3B and FHL2. Component of a MLL1 complex, composed of at least the core components KMT2A/MLL1, ASH2L, HCFC1, WDR5 and RBBP5, as well as the facultative components BACC1, CHD8, DPY30, E2F6, HCFC2, HSP70, INO80C, KANSL1, LAS1L, MAX, MCRS1, MEN1, MGA, KAT8, PELP1, PHF20, PRP31, RING2, RUVBL1, RUVBL2, SENP3, TAF1, TAF4, TAF6, TAF7, TAF9 and TEX10. Component of a THAP1/THAP3-HCFC1-OGT complex that is required for the regulation of the transcriptional activity of RRM1. Interacts directly with THAP3 (via its HBM). Interacts (via the Kelch-repeat domain) with THAP1 (via the HBM); the interaction recruits HCHC1 to the RRM1. Interacts with THAP7 and THAP11 (via the HMB). Interacts directly with OGT; the interaction, which requires the HCFC1 cleavage site domain, glycosylates and promotes the proteolytic processing of HCFC1, retains OGT in the nucleus and impacts the expression of herpes simplex virus immediate early viral genes. Component of the SET1 complex, at least composed of the catalytic subunit (SETD1A or SETD1B), WDR5, WDR82, RBBP5, ASH2L, CXXC1, HCFC1 and DPY30. Component of the NSL complex at least composed of MOF/KAT8, KANSL1, KANSL2, KANSL3, MCRS1, PHF20, OGT1/OGT, WDR5 and HCFC1. Component of a complex at least composed of ZNF335, HCFC1, CCAR2, EMSY, MKI67, RBBP5, ASH2L and WDR5; the complex is formed as a result of interactions between components of a nuclear receptor-mediated transcription complex and a histone methylation complex. Within the complex interacts with ZNF335. Interacts with TET2 and TET3. Interacts with HCFC1R1. Interacts with THAP11. Interacts (via Kelch domain) with KMT2E/MLL5 isoform 3 (via HBM motif). Interacts with E2F1. Accessory scaffold component of the polycomb repressive deubiquitinase (PR-DUB) complex, at least composed of BAP1, one of ASXL1, ASXL2 or (probably) ASXL3 and one of MBD5 or MBD6; the PR-DUB core associates with a number of accessory proteins, including FOXK1, FOXK2, KDM1B, HCFC1, YY1 and OGT. Interacts with YY1 (via Gly-rich region); the interaction is direct. Interacts with BAP1 (via HBM-like motif). In terms of assembly, (Microbial infection) Associates with the VP16-induced complex; binding to HCFC1 activates the viral transcriptional activator VP16 for association with POU2F1, to form a multiprotein-DNA complex responsible for activating transcription of the viral immediate early genes. Interacts with the viral transactivator protein VP16. In terms of processing, proteolytically cleaved at one or several PPCE--THET sites within the HCF repeats. Further cleavage of the primary N- and C-terminal chains results in a 'trimming' and accumulation of the smaller chains. Cleavage is promoted by O-glycosylation. Post-translationally, O-glycosylated. GlcNAcylation by OGT promotes proteolytic processing. Ubiquitinated. Lys-1807 and Lys-1808 are ubiquitinated both via 'Lys-48'- and 'Lys-63'-linked polyubiquitin chains. BAP1 mediated deubiquitination of 'Lys-48'-linked polyubiquitin chains; deubiquitination by BAP1 does not seem to stabilize the protein. As to expression, highly expressed in fetal tissues and the adult kidney. Present in all tissues tested.

It is found in the cytoplasm. The protein localises to the nucleus. Functionally, transcriptional coregulator. Serves as a scaffold protein, bridging interactions between transcription factors, including THAP11 and ZNF143, and transcriptional coregulators. Involved in control of the cell cycle. Also antagonizes transactivation by ZBTB17 and GABP2; represses ZBTB17 activation of the p15(INK4b) promoter and inhibits its ability to recruit p300. Coactivator for EGR2 and GABP2. Tethers the chromatin modifying Set1/Ash2 histone H3 'Lys-4' methyltransferase (H3K4me) and Sin3 histone deacetylase (HDAC) complexes (involved in the activation and repression of transcription, respectively) together. Component of a THAP1/THAP3-HCFC1-OGT complex that is required for the regulation of the transcriptional activity of RRM1. As part of the NSL complex it may be involved in acetylation of nucleosomal histone H4 on several lysine residues. Recruits KMT2E/MLL5 to E2F1 responsive promoters promoting transcriptional activation and thereby facilitates G1 to S phase transition. Modulates expression of homeobox protein PDX1, perhaps acting in concert with transcription factor E2F1, thereby regulating pancreatic beta-cell growth and glucose-stimulated insulin secretion. May negatively modulate transcriptional activity of FOXO3. (Microbial infection) In case of human herpes simplex virus (HSV) infection, HCFC1 forms a multiprotein-DNA complex with the viral transactivator protein VP16 and POU2F1 thereby enabling the transcription of the viral immediate early genes. This Homo sapiens (Human) protein is Host cell factor 1.